A 433-amino-acid polypeptide reads, in one-letter code: Sensor protein RstB (433 aa).

The Cytoplasmic portion of the chain corresponds to 1 to 3 (MKK). The helical transmembrane segment at 4-24 (LFIQFYLLLFVCFLVMSLLVG) threads the bilayer. At 25–135 (LVYKFTAERA…PYLYYLHQMR (111 aa)) the chain is on the periplasmic side. A helical membrane pass occupies residues 136–156 (LLDIALIAFIAISLAFPVFIW). At 157–433 (MRPHWQDMLK…WHNIPQFTSA (277 aa)) the chain is on the cytoplasmic side. The HAMP domain maps to 158–210 (RPHWQDMLKLEAAAQRFGDGHLNERIHFDEGSSFERLGVAFNQMADNINALIA). The Histidine kinase domain maps to 218 to 425 (GIAHELRTPL…RFSFSWPLWH (208 aa)). Histidine 276 is modified (phosphohistidine; by autocatalysis).

Post-translationally, autophosphorylated.

It is found in the cell inner membrane. It catalyses the reaction ATP + protein L-histidine = ADP + protein N-phospho-L-histidine.. In terms of biological role, member of the two-component regulatory system RstB/RstA. RstB functions as a membrane-associated protein kinase that phosphorylates RstA. This Escherichia coli (strain K12) protein is Sensor protein RstB (rstB).